A 65-amino-acid polypeptide reads, in one-letter code: Large ribosomal subunit protein bL35 (65 aa).

The protein belongs to the bacterial ribosomal protein bL35 family.

The chain is Large ribosomal subunit protein bL35 from Thermoanaerobacter sp. (strain X514).